Here is a 142-residue protein sequence, read N- to C-terminus: Large ribosomal subunit protein uL11 (142 aa).

This sequence belongs to the universal ribosomal protein uL11 family. Part of the ribosomal stalk of the 50S ribosomal subunit. Interacts with L10 and the large rRNA to form the base of the stalk. L10 forms an elongated spine to which L12 dimers bind in a sequential fashion forming a multimeric L10(L12)X complex. In terms of processing, one or more lysine residues are methylated.

Forms part of the ribosomal stalk which helps the ribosome interact with GTP-bound translation factors. The chain is Large ribosomal subunit protein uL11 from Proteus mirabilis (strain HI4320).